The sequence spans 201 residues: Peptide deformylase (201 aa).

Positions 1 to 24 (MANHFSQLAKKSKTNGNSEKIAKE) are disordered. 2 residues coordinate Fe cation: Cys-121 and His-163. The active site involves Glu-164. Fe cation is bound at residue His-167.

It belongs to the polypeptide deformylase family. Requires Fe(2+) as cofactor.

The enzyme catalyses N-terminal N-formyl-L-methionyl-[peptide] + H2O = N-terminal L-methionyl-[peptide] + formate. In terms of biological role, removes the formyl group from the N-terminal Met of newly synthesized proteins. Requires at least a dipeptide for an efficient rate of reaction. N-terminal L-methionine is a prerequisite for activity but the enzyme has broad specificity at other positions. The polypeptide is Peptide deformylase (Prochlorococcus marinus (strain MIT 9312)).